Reading from the N-terminus, the 264-residue chain is Flagellar basal-body rod protein FlgG (264 aa).

Belongs to the flagella basal body rod proteins family. The basal body constitutes a major portion of the flagellar organelle and consists of four rings (L,P,S, and M) mounted on a central rod. The rod consists of about 26 subunits of FlgG in the distal portion, and FlgB, FlgC and FlgF are thought to build up the proximal portion of the rod with about 6 subunits each.

The protein resides in the bacterial flagellum basal body. The polypeptide is Flagellar basal-body rod protein FlgG (flgG) (Bacillus subtilis (strain 168)).